The following is a 156-amino-acid chain: Perlucin-like protein (156 aa).

An N-terminal signal peptide occupies residues 1–22 (MGKLTVVGILTLFIFYIVAASG). 3 disulfide bridges follow: cysteine 30–cysteine 41, cysteine 58–cysteine 156, and cysteine 131–cysteine 147. The region spanning 37–156 (YKTNCYFFSP…CNTDQMGYIC (120 aa)) is the C-type lectin domain.

In terms of tissue distribution, component of the organic matrix of calcified shell layers like nacre and prisms.

The protein localises to the secreted. The sequence is that of Perlucin-like protein from Mytilus galloprovincialis (Mediterranean mussel).